Reading from the N-terminus, the 357-residue chain is 3-isopropylmalate dehydrogenase, chloroplastic (357 aa).

The N-terminal 29 residues, 1-29 (MALQIAKRLLRCRADSVASSVRFFDRTFT), are a transit peptide targeting the chloroplast. Substrate-binding residues include Arg120, Arg130, Arg151, and Asp238. Mg(2+)-binding residues include Asp238, Asp262, and Asp266. Residue 296–308 (GSAPDIAGKNLAN) participates in NAD(+) binding.

It belongs to the isocitrate and isopropylmalate dehydrogenases family. As to quaternary structure, homodimer. Mg(2+) is required as a cofactor. It depends on Mn(2+) as a cofactor.

The protein localises to the plastid. It is found in the chloroplast. It carries out the reaction (2R,3S)-3-isopropylmalate + NAD(+) = 4-methyl-2-oxopentanoate + CO2 + NADH. Its pathway is amino-acid biosynthesis; L-leucine biosynthesis; L-leucine from 3-methyl-2-oxobutanoate: step 3/4. Catalyzes the oxidation of 3-carboxy-2-hydroxy-4-methylpentanoate (3-isopropylmalate) to 3-carboxy-4-methyl-2-oxopentanoate. The product decarboxylates to 4-methyl-2 oxopentanoate. The chain is 3-isopropylmalate dehydrogenase, chloroplastic from Solanum tuberosum (Potato).